Here is a 211-residue protein sequence, read N- to C-terminus: MGKSPVVIGIAGGSGSGKTSVTRSIYEQFKGHSILMIQQDLYYKDQSHLPFEERLNTNYDHPLAFDNDYLIEHIQELLNYRPIEKPIYDYKLHTRSEETIPVEPKDVIILEGILVLEDKRLRDLMDMKLYVDTDADLRIIRRIMRDINERGRSIDSVIEQYVSVVRPMHNQFVEPTKRYADIIIPEGGQNHVAIDLMVTKIQTILEQNAIL.

12 to 19 (GGSGSGKT) lines the ATP pocket.

It belongs to the uridine kinase family.

Its subcellular location is the cytoplasm. The catalysed reaction is uridine + ATP = UMP + ADP + H(+). It catalyses the reaction cytidine + ATP = CMP + ADP + H(+). Its pathway is pyrimidine metabolism; CTP biosynthesis via salvage pathway; CTP from cytidine: step 1/3. It functions in the pathway pyrimidine metabolism; UMP biosynthesis via salvage pathway; UMP from uridine: step 1/1. The polypeptide is Uridine kinase (Bacillus velezensis (strain DSM 23117 / BGSC 10A6 / LMG 26770 / FZB42) (Bacillus amyloliquefaciens subsp. plantarum)).